We begin with the raw amino-acid sequence, 394 residues long: uncharacterized protein (394 aa).

A run of 11 helical transmembrane segments spans residues 10–30 (PALI…NYYA), 50–70 (FIVT…VPLG), 79–99 (IVSM…SQSL), 100–120 (AMMI…QILV), 138–158 (TIMS…GLLA), 166–186 (VFWV…RGLP), 218–238 (LLGC…AFLL), 243–263 (FNYS…GALG), 291–311 (WLAI…ILVL), 337–357 (LTAG…LISA), and 364–384 (GWAG…LVWW).

This sequence belongs to the major facilitator superfamily.

It localises to the cell inner membrane. This is an uncharacterized protein from Escherichia coli O157:H7.